A 359-amino-acid chain; its full sequence is Ferredoxin--NADP reductase (359 aa).

FAD contacts are provided by aspartate 48, glutamine 56, tyrosine 61, alanine 101, phenylalanine 139, aspartate 304, and serine 345.

This sequence belongs to the ferredoxin--NADP reductase type 2 family. Homodimer. The cofactor is FAD.

The catalysed reaction is 2 reduced [2Fe-2S]-[ferredoxin] + NADP(+) + H(+) = 2 oxidized [2Fe-2S]-[ferredoxin] + NADPH. The sequence is that of Ferredoxin--NADP reductase from Ralstonia pickettii (strain 12J).